We begin with the raw amino-acid sequence, 588 residues long: Lamin-B1 (588 aa).

The span at 1-12 shows a compositional bias: polar residues; the sequence is MATATPVQQQRA. Positions 1-34 are disordered; sequence MATATPVQQQRAGSRASAPATPLSPTRLSRLQEK. N-acetylalanine is present on Ala2. A head region spans residues 2–35; that stretch reads ATATPVQQQRAGSRASAPATPLSPTRLSRLQEKE. 2 positions are modified to phosphothreonine: Thr3 and Thr5. Arg15 bears the Omega-N-methylarginine mark. Phosphoserine is present on Ser17. Thr21 is subject to Phosphothreonine. Ser24 carries the phosphoserine modification. Residue Thr26 is modified to Phosphothreonine. A Phosphoserine modification is found at Ser29. The 357-residue stretch at 33–389 folds into the IF rod domain; the sequence is EKEELRELND…KLLEGEEERL (357 aa). The segment at 36–70 is coil 1A; the sequence is ELRELNDRLAVYIDKVRSLETENSALQLQVTEREE. The linker 1 stretch occupies residues 71–82; sequence VRGRELTGLKAL. A coil 1B region spans residues 83–216; that stretch reads YETELADARR…EFRKNMYEEE (134 aa). Lys103 participates in a covalent cross-link: Glycyl lysine isopeptide (Lys-Gly) (interchain with G-Cter in SUMO2). The residue at position 112 (Lys112) is an N6-acetyllysine. Residue Lys124 forms a Glycyl lysine isopeptide (Lys-Gly) (interchain with G-Cter in SUMO2) linkage. Ser127 carries the phosphoserine modification. Lys146 is covalently cross-linked (Glycyl lysine isopeptide (Lys-Gly) (interchain with G-Cter in SUMO2)). Residue Lys158 is modified to N6-acetyllysine; alternate. A Glycyl lysine isopeptide (Lys-Gly) (interchain with G-Cter in SUMO2); alternate cross-link involves residue Lys158. Ser159 is modified (phosphoserine). Residue Lys182 forms a Glycyl lysine isopeptide (Lys-Gly) (interchain with G-Cter in SUMO2) linkage. Phosphoserine occurs at positions 201 and 233. Positions 217–244 are linker 2; that stretch reads INETRRKHETRLVEVDSGRQIEYEYKLA. Residues Lys242 and Lys262 each participate in a glycyl lysine isopeptide (Lys-Gly) (interchain with G-Cter in SUMO2) cross-link. Residues 245 to 387 form a coil 2 region; it reads QALHEMREQH…YRKLLEGEEE (143 aa). Lys272 is modified (N6-acetyllysine; alternate). A Glycyl lysine isopeptide (Lys-Gly) (interchain with G-Cter in SUMO2); alternate cross-link involves residue Lys272. 2 positions are modified to phosphoserine: Ser279 and Ser303. Lys313 is covalently cross-linked (Glycyl lysine isopeptide (Lys-Gly) (interchain with G-Cter in SUMO2)). N6-acetyllysine; alternate is present on Lys331. Lys331 is covalently cross-linked (Glycyl lysine isopeptide (Lys-Gly) (interchain with G-Cter in SUMO2); alternate). Residues Ser376 and Ser394 each carry the phosphoserine modification. A tail region spans residues 388 to 588; sequence RLKLSPSPSS…RASNKSCAIM (201 aa). Residues 391–410 show a composition bias toward low complexity; sequence LSPSPSSRVTVSRASSSRSV. Residues 391–433 are disordered; that stretch reads LSPSPSSRVTVSRASSSRSVRTTRGKRKRVDVEESEASSSVSI. Thr400 carries an O-linked (GlcNAc) threonine glycan. At Arg414 the chain carries Omega-N-methylarginine. A Nuclear localization signal motif is present at residues 416–421; sequence KRKRVD. In terms of domain architecture, LTD spans 431–547; it reads VSISHSASAT…EEVAQRSTVF (117 aa). Lys484 is subject to N6-acetyllysine. Residue Lys533 forms a Glycyl lysine isopeptide (Lys-Gly) (interchain with G-Cter in SUMO2) linkage. A Phosphoserine modification is found at Ser535. Lys548 is covalently cross-linked (Glycyl lysine isopeptide (Lys-Gly) (interchain with G-Cter in SUMO2)). A Cysteine methyl ester modification is found at Cys585. A lipid anchor (S-farnesyl cysteine) is attached at Cys585. Positions 586–588 are cleaved as a propeptide — removed in mature form; that stretch reads AIM.

The protein belongs to the intermediate filament family. As to quaternary structure, homodimer. Lamin dimers then assemble into dimeric head-to-tail polymers. Ultimately, two head-to-tail polymers assemble laterally into a protofilament with a uniformly shaped rod of 3.5 nm in diameter. Interacts with SPAG4 and SEPT12. B-type lamins undergo a series of modifications, such as farnesylation and phosphorylation. Increased phosphorylation of the lamins occurs before envelope disintegration and probably plays a role in regulating lamin associations. In terms of processing, phosphorylation plays a key role in lamin organization, subcellular localization and nuclear envelope disintegration. Phosphorylation by CDK1 at Ser-24 and Ser-394 at the onset of mitosis drives lamin disassembly and nuclear envelope breakdown.

The protein resides in the nucleus lamina. Lamins are intermediate filament proteins that assemble into a filamentous meshwork, and which constitute the major components of the nuclear lamina, a fibrous layer on the nucleoplasmic side of the inner nuclear membrane. Lamins provide a framework for the nuclear envelope, bridging the nuclear envelope and chromatin, thereby playing an important role in nuclear assembly, chromatin organization, nuclear membrane and telomere dynamics. The structural integrity of the lamina is strictly controlled by the cell cycle, as seen by the disintegration and formation of the nuclear envelope in prophase and telophase, respectively. The chain is Lamin-B1 (Lmnb1) from Mus musculus (Mouse).